The chain runs to 94 residues: Co-chaperonin GroES (94 aa).

It belongs to the GroES chaperonin family. Heptamer of 7 subunits arranged in a ring. Interacts with the chaperonin GroEL.

Its subcellular location is the cytoplasm. Functionally, together with the chaperonin GroEL, plays an essential role in assisting protein folding. The GroEL-GroES system forms a nano-cage that allows encapsulation of the non-native substrate proteins and provides a physical environment optimized to promote and accelerate protein folding. GroES binds to the apical surface of the GroEL ring, thereby capping the opening of the GroEL channel. The chain is Co-chaperonin GroES from Lactococcus lactis subsp. lactis (strain IL1403) (Streptococcus lactis).